The chain runs to 141 residues: Large ribosomal subunit protein uL6 (141 aa).

Belongs to the universal ribosomal protein uL6 family.

The polypeptide is Large ribosomal subunit protein uL6 (Haemonchus contortus (Barber pole worm)).